The chain runs to 223 residues: 2-C-methyl-D-erythritol 4-phosphate cytidylyltransferase (223 aa).

It belongs to the IspD/TarI cytidylyltransferase family. IspD subfamily.

The catalysed reaction is 2-C-methyl-D-erythritol 4-phosphate + CTP + H(+) = 4-CDP-2-C-methyl-D-erythritol + diphosphate. It participates in isoprenoid biosynthesis; isopentenyl diphosphate biosynthesis via DXP pathway; isopentenyl diphosphate from 1-deoxy-D-xylulose 5-phosphate: step 2/6. Catalyzes the formation of 4-diphosphocytidyl-2-C-methyl-D-erythritol from CTP and 2-C-methyl-D-erythritol 4-phosphate (MEP). The chain is 2-C-methyl-D-erythritol 4-phosphate cytidylyltransferase from Prochlorococcus marinus (strain MIT 9515).